The sequence spans 474 residues: 3-isopropylmalate dehydratase large subunit (474 aa).

Residues Cys-352, Cys-413, and Cys-416 each coordinate [4Fe-4S] cluster.

This sequence belongs to the aconitase/IPM isomerase family. LeuC type 1 subfamily. Heterodimer of LeuC and LeuD. It depends on [4Fe-4S] cluster as a cofactor.

The enzyme catalyses (2R,3S)-3-isopropylmalate = (2S)-2-isopropylmalate. Its pathway is amino-acid biosynthesis; L-leucine biosynthesis; L-leucine from 3-methyl-2-oxobutanoate: step 2/4. Catalyzes the isomerization between 2-isopropylmalate and 3-isopropylmalate, via the formation of 2-isopropylmaleate. In Pseudomonas savastanoi pv. phaseolicola (strain 1448A / Race 6) (Pseudomonas syringae pv. phaseolicola (strain 1448A / Race 6)), this protein is 3-isopropylmalate dehydratase large subunit.